The chain runs to 387 residues: 1-deoxy-D-xylulose 5-phosphate reductoisomerase (387 aa).

Positions 10, 11, 12, 13, 38, and 119 each coordinate NADPH. K120 lines the 1-deoxy-D-xylulose 5-phosphate pocket. E121 lines the NADPH pocket. D145 contributes to the Mn(2+) binding site. Residues S146, E147, S170, and H193 each coordinate 1-deoxy-D-xylulose 5-phosphate. E147 provides a ligand contact to Mn(2+). G199 contributes to the NADPH binding site. 1-deoxy-D-xylulose 5-phosphate contacts are provided by S206, N211, K212, and E215. E215 provides a ligand contact to Mn(2+).

It belongs to the DXR family. Mg(2+) is required as a cofactor. The cofactor is Mn(2+).

The catalysed reaction is 2-C-methyl-D-erythritol 4-phosphate + NADP(+) = 1-deoxy-D-xylulose 5-phosphate + NADPH + H(+). It functions in the pathway isoprenoid biosynthesis; isopentenyl diphosphate biosynthesis via DXP pathway; isopentenyl diphosphate from 1-deoxy-D-xylulose 5-phosphate: step 1/6. Catalyzes the NADPH-dependent rearrangement and reduction of 1-deoxy-D-xylulose-5-phosphate (DXP) to 2-C-methyl-D-erythritol 4-phosphate (MEP). The protein is 1-deoxy-D-xylulose 5-phosphate reductoisomerase of Wolbachia pipientis wMel.